A 135-amino-acid chain; its full sequence is Insoluble matrix shell protein 5 (135 aa).

Positions 1 to 16 are cleaved as a signal peptide; the sequence is MILVVTLACLIAVVCC. EF-hand domains lie at 21 to 56 and 93 to 128; these read TDQGQISKVFKAYDIDGNNKISRVEGTMVFRDADLN and IEFVEGNQGFDHFDKNRDNEISSWEFTQTWMETVRP. Residues Asp-34, Asp-36, Asn-38, Lys-40, Glu-45, Asp-106, Asn-108, Asp-110, Glu-112, and Glu-117 each contribute to the Ca(2+) site.

Component of the acid-insoluble organic matrix of the calcified shell.

The protein localises to the secreted. This Ruditapes philippinarum (Japanese carpet shell) protein is Insoluble matrix shell protein 5.